The sequence spans 2414 residues: Centrosome-associated protein CEP250 (2414 aa).

Coiled-coil stretches lie at residues Glu91 to Arg153 and Leu248 to Glu357. Disordered regions lie at residues Glu356 to Asp384, Ala672 to Ala707, Ser1191 to Gln1212, Glu1269 to Leu1303, Ala2050 to Gln2071, Ala2194 to Leu2238, and Arg2275 to Asp2317. Positions Gln371–Asp381 are enriched in polar residues. The stretch at Gln400 to Gln1165 forms a coiled coil. Residues Arg684 to Gln704 are compositionally biased toward basic and acidic residues. Coiled coils occupy residues Leu1237 to Ser2200 and Gly2231 to Ala2290. A compositionally biased stretch (low complexity) spans Gln1280–Ser1289. The span at Glu2196 to Ala2209 shows a compositional bias: polar residues. Over residues Arg2275–Arg2286 the composition is skewed to basic and acidic residues. The residue at position 2292 (Ser2292) is a Phosphoserine. Residues Gln2305–Asp2317 are compositionally biased toward low complexity. Residues Leu2320–Tyr2345 are a coiled coil. Phosphoserine; by NEK2 is present on residues Ser2389 and Ser2393. The tract at residues Leu2390–Arg2414 is disordered.

Monomer and homodimer. Forms a complex in vitro with both NEK2 kinase and the PPP1CC catalytic subunit of protein phosphatase 1 (PP1). Interacts with CEP135. Interacts with CROCC/rootletin. Interacts with CNTLN. Interacts with NIN (via C-terminus). Post-translationally, differentially phosphorylated during cell cycle. Phosphorylation may regulate association/dissociation from centrosome. During M phase of mitosis, C-terminal part is phosphorylated by NEK2, suggesting that it may trigger the dissociation from the mitotic centrosome. Dephosphorylated in vitro by the PP1 phosphatase. As to expression, expressed in the retina.

It is found in the cytoplasm. Its subcellular location is the perinuclear region. The protein resides in the cytoskeleton. It localises to the microtubule organizing center. The protein localises to the centrosome. It is found in the centriole. Its subcellular location is the cilium basal body. The protein resides in the cell projection. It localises to the cilium. The protein localises to the photoreceptor outer segment. It is found in the photoreceptor inner segment. Its function is as follows. Plays an important role in centrosome cohesion during interphase. Recruits CCDC102B to the proximal ends of centrioles. Maintains centrosome cohesion by forming intercentriolar linkages. Accumulates at the proximal end of each centriole, forming supramolecular assemblies with viscous material properties that promote organelle cohesion. May be involved in ciliogenesis. The polypeptide is Centrosome-associated protein CEP250 (Cep250) (Mus musculus (Mouse)).